The primary structure comprises 389 residues: Cytochrome f (389 aa).

Residues 1 to 42 form the signal peptide; it reads MTTFFISKVNGPVNKSLIWLKIHIYEFFLLKFMLLFPPTVCS. 4 residues coordinate heme: Y105, C125, C128, and H129. A helical membrane pass occupies residues 355 to 375; sequence LQALIVFFIFVILTQLFLVLK.

It belongs to the cytochrome f family. The 4 large subunits of the cytochrome b6-f complex are cytochrome b6, subunit IV (17 kDa polypeptide, petD), cytochrome f and the Rieske protein, while the 4 small subunits are PetG, PetL, PetM and PetN. The complex functions as a dimer. Heme serves as cofactor.

The protein resides in the plastid. It is found in the chloroplast thylakoid membrane. Component of the cytochrome b6-f complex, which mediates electron transfer between photosystem II (PSII) and photosystem I (PSI), cyclic electron flow around PSI, and state transitions. In Pleurastrum terricola (Filamentous green alga), this protein is Cytochrome f.